The chain runs to 1380 residues: DNA-directed RNA polymerase subunit beta (1380 aa).

This sequence belongs to the RNA polymerase beta chain family. As to quaternary structure, the RNAP catalytic core consists of 2 alpha, 1 beta, 1 beta' and 1 omega subunit. When a sigma factor is associated with the core the holoenzyme is formed, which can initiate transcription.

The enzyme catalyses RNA(n) + a ribonucleoside 5'-triphosphate = RNA(n+1) + diphosphate. Functionally, DNA-dependent RNA polymerase catalyzes the transcription of DNA into RNA using the four ribonucleoside triphosphates as substrates. In Nitrobacter hamburgensis (strain DSM 10229 / NCIMB 13809 / X14), this protein is DNA-directed RNA polymerase subunit beta.